The primary structure comprises 309 residues: Aspartate carbamoyltransferase catalytic subunit (309 aa).

The carbamoyl phosphate site is built by arginine 58 and threonine 59. Residue lysine 86 coordinates L-aspartate. Residues arginine 108, histidine 136, and glutamine 139 each coordinate carbamoyl phosphate. L-aspartate is bound by residues arginine 169 and arginine 223. The carbamoyl phosphate site is built by glycine 264 and proline 265.

This sequence belongs to the aspartate/ornithine carbamoyltransferase superfamily. ATCase family. In terms of assembly, heterododecamer (2C3:3R2) of six catalytic PyrB chains organized as two trimers (C3), and six regulatory PyrI chains organized as three dimers (R2).

The catalysed reaction is carbamoyl phosphate + L-aspartate = N-carbamoyl-L-aspartate + phosphate + H(+). Its pathway is pyrimidine metabolism; UMP biosynthesis via de novo pathway; (S)-dihydroorotate from bicarbonate: step 2/3. Its function is as follows. Catalyzes the condensation of carbamoyl phosphate and aspartate to form carbamoyl aspartate and inorganic phosphate, the committed step in the de novo pyrimidine nucleotide biosynthesis pathway. This is Aspartate carbamoyltransferase catalytic subunit from Pelotomaculum thermopropionicum (strain DSM 13744 / JCM 10971 / SI).